The primary structure comprises 735 residues: MFGQQLASDVQQYLERLEKQRQLKVGADEASAGLTMGGDALRVPFLDFATATPKRHQTVVPGVGTLHDCCEHSPLFSAVARRLLFNSLVPAQLKGRDFGGDHTAKLEFLAPELVRAVARLRFKECAPADVVPQRNAYYSVLNTFQALHRSEAFRQLVHFVRDFAQLLKTSFRASSLTETTGPPKKRAKVDVATHGRTYGTLELFQKMILMHATYFLAAVLLGDHAEQVNTFLRLVFEIPLFSDAAVRHFRQRATVFLVPRRHGKTWFLVPLIALSLASFRGIKIGYTAHIRKATEPVFEEIDACLRGWFGSARVDHVKGETISFSFPDGSRSTIVFASSHNTNGIRGQDFNLLFVDEANFIRPDAVQTIMGFLNQANCKIIFVSSTNTGKASTSFLYNLRGAADELLNVVTYICDDHMPRVVTHTNATACSCYILNKPVFITMDGAVRRTADLFLADSFMQEIIGGQARETGDDRPVLTKSAGERFLLYRPSTTTNSGLMAPDLYVYVDPAFTANTRASGTGVAVVGRYRDDYIIFALEHFFLRALTGSAPADIARCVVHSLTQVLALHPGAFRGVRVAVEGNSSQDSAVAIATHVHTEMHRLLASEGADAGSGPELLFYHCEPPGSAVLYPFFLLNKQKTPAFEHFIKKFNSGGVMASQEIVSATVRLQTDPVEYLLEQLNNLTETVSPNTDVRTYSGKRNGASDDLMVAVIMAIYLAAQAGPPHTFAPITRVS.

A Nuclear localization signal motif is present at residues 183–189 (PKKRAKV). The Walker A motif motif lies at 258–265 (VPRRHGKT). The Walker B motif signature appears at 352–357 (LLFVDE). Glu357 acts as the For ATPase activity in catalysis. Active-site for nuclease activity residues include Asp509, Glu581, and Asp707.

This sequence belongs to the herpesviridae TRM3 protein family. In terms of assembly, interacts with the terminase subunits TRM1 and TRM2. Interacts with portal protein.

The protein resides in the host nucleus. In terms of biological role, component of the molecular motor that translocates viral genomic DNA in empty capsid during DNA packaging. Forms a tripartite terminase complex together with TRM1 and TRM2 in the host cytoplasm. Once the complex reaches the host nucleus, it interacts with the capsid portal vertex. This portal forms a ring in which genomic DNA is translocated into the capsid. TRM3 carries an RNase H-like nuclease activity that plays an important role for the cleavage of concatemeric viral DNA into unit length genomes. The protein is Tripartite terminase subunit 3 of Homo sapiens (Human).